We begin with the raw amino-acid sequence, 176 residues long: Probable DNA-directed RNA polymerase subunit delta (176 aa).

The HTH HARE-type domain maps to Leu-14–Trp-81. Disordered stretches follow at residues Val-91 to Asp-119 and Asp-140 to Lys-176. Acidic residues-rich tracts occupy residues Asp-105 to Asp-119 and Thr-159 to Lys-176.

This sequence belongs to the RpoE family. As to quaternary structure, RNAP is composed of a core of 2 alpha, a beta and a beta' subunits. The core is associated with a delta subunit and one of several sigma factors.

In terms of biological role, participates in both the initiation and recycling phases of transcription. In the presence of the delta subunit, RNAP displays an increased specificity of transcription, a decreased affinity for nucleic acids, and an increased efficiency of RNA synthesis because of enhanced recycling. This is Probable DNA-directed RNA polymerase subunit delta from Listeria welshimeri serovar 6b (strain ATCC 35897 / DSM 20650 / CCUG 15529 / CIP 8149 / NCTC 11857 / SLCC 5334 / V8).